A 361-amino-acid chain; its full sequence is Pseudouridine-5'-phosphate glycosidase (361 aa).

Catalysis depends on glutamate 27, which acts as the Proton donor. Lysine 88 and valine 108 together coordinate substrate. Residue aspartate 140 coordinates Mn(2+). 142–144 contributes to the substrate binding site; sequence SAD. The active-site Nucleophile is the lysine 161. A disordered region spans residues 306 to 361; sequence DRSPTDPAAPDPTAPDPAAPDPTAPDPAAPDSAAPDLAGPDPSAPDPAAVARAHRP. Residues 312 to 333 are compositionally biased toward pro residues; that stretch reads PAAPDPTAPDPAAPDPTAPDPA. Residues 334 to 354 show a composition bias toward low complexity; the sequence is APDSAAPDLAGPDPSAPDPAA.

This sequence belongs to the pseudouridine-5'-phosphate glycosidase family. In terms of assembly, homotrimer. It depends on Mn(2+) as a cofactor.

It catalyses the reaction D-ribose 5-phosphate + uracil = psi-UMP + H2O. Its function is as follows. Catalyzes the reversible cleavage of pseudouridine 5'-phosphate (PsiMP) to ribose 5-phosphate and uracil. Functions biologically in the cleavage direction, as part of a pseudouridine degradation pathway. The chain is Pseudouridine-5'-phosphate glycosidase from Frankia alni (strain DSM 45986 / CECT 9034 / ACN14a).